We begin with the raw amino-acid sequence, 520 residues long: MGEKVYIFDTTLRDGEQAPGFSMTTEEKLQMAHQLAKLNVDIIEAGFAAASKGDFEAVNRIAKEVKGPVICSLARALESDIEIAAKALEPAERKRIHTFIATSPIHMEYKLRMTPDQVLERIKKAVSFARNFTDDVEFSCEDATRSEREFLYRAIETAIKHGATVINIPDTVGYAIPEEFGQLIEDIMNNVPNIDKVILSVHCHDDLGLATANSLTAVKHGARQVECTINGIGERAGNAALEEVVMALKVRKDFFGDLYTDVNTKEIYKTSRLLCRITGNFVQPNKAIVGDNAFAHESGIHQHGVLSHRMTYEIMNPEDVGFPMSRIVLGKHSGRHALKRRLEELGFKFTKEELDRIFEKFKELADRKKEVYDEDLEALIYQEFMKIEDHEPVKVLHFQVQSGDNMIPTATVKLEFKGEEREASSTGNGPVDATIKAIQKALGIEPKLLDYSIKALTPNTDAQAEARVVLELDGVKASGRGVDTDIIKASVKAFTDALNRAIVRKEYIIQRQEIREEGTV.

A Pyruvate carboxyltransferase domain is found at 5–268 (VYIFDTTLRD…YTDVNTKEIY (264 aa)). Mn(2+)-binding residues include Asp14, His202, His204, and Asn238. The segment at 394–520 (KVLHFQVQSG…RQEIREEGTV (127 aa)) is regulatory domain.

Belongs to the alpha-IPM synthase/homocitrate synthase family. LeuA type 1 subfamily. Homodimer. Mn(2+) is required as a cofactor.

It localises to the cytoplasm. It carries out the reaction 3-methyl-2-oxobutanoate + acetyl-CoA + H2O = (2S)-2-isopropylmalate + CoA + H(+). It participates in amino-acid biosynthesis; L-leucine biosynthesis; L-leucine from 3-methyl-2-oxobutanoate: step 1/4. Functionally, catalyzes the condensation of the acetyl group of acetyl-CoA with 3-methyl-2-oxobutanoate (2-ketoisovalerate) to form 3-carboxy-3-hydroxy-4-methylpentanoate (2-isopropylmalate). The sequence is that of 2-isopropylmalate synthase from Aquifex aeolicus (strain VF5).